The chain runs to 235 residues: Homeobox-leucine zipper protein ATHB-12 (235 aa).

Residues 27 to 86 (KSNNQKRFSEEQIKSLELIFESETRLEPRKKVQVARELGLQPRQVAIWFQNKRARWKTKQ) constitute a DNA-binding region (homeobox). The tract at residues 87 to 122 (LEKEYNTLRANYNNLASQFEIMKKEKQSLVSELQRL) is leucine-zipper. 2 stretches are compositionally biased toward basic and acidic residues: residues 128–138 (RPKEEKHHECC) and 152–162 (HNGKSEPEGRL). Positions 128–167 (RPKEEKHHECCGDQGLALSSSTESHNGKSEPEGRLDQGSV) are disordered.

Belongs to the HD-ZIP homeobox family. Class I subfamily. Interacts with TFIIB1. In terms of tissue distribution, widely expressed.

The protein localises to the nucleus. Its function is as follows. Probable transcription activator that may act as growth regulators in response to water deficit. This is Homeobox-leucine zipper protein ATHB-12 (ATHB-12) from Arabidopsis thaliana (Mouse-ear cress).